The following is a 230-amino-acid chain: Ribosomal RNA small subunit methyltransferase Nep1 (230 aa).

Residues Gly184, Gly189, and 205–210 contribute to the S-adenosyl-L-methionine site; that span reads IYNKPL.

It belongs to the class IV-like SAM-binding methyltransferase superfamily. RNA methyltransferase NEP1 family. As to quaternary structure, homodimer.

The catalysed reaction is a pseudouridine in rRNA + S-adenosyl-L-methionine = an N(1)-methylpseudouridine in rRNA + S-adenosyl-L-homocysteine + H(+). Functionally, methyltransferase involved in ribosomal biogenesis. Specifically catalyzes the N1-methylation of the pseudouridine corresponding to position 914 in M.jannaschii 16S rRNA. The polypeptide is Ribosomal RNA small subunit methyltransferase Nep1 (Staphylothermus marinus (strain ATCC 43588 / DSM 3639 / JCM 9404 / F1)).